Consider the following 409-residue polypeptide: Glycosyltransferase GtfC (409 aa).

This sequence belongs to the glycosyltransferase 28 family.

It catalyses the reaction dTDP-beta-L-vancosamine + devancoaminyl-vancomycin = epivancomycin + dTDP + H(+). The catalysed reaction is chloroorienticin B + dTDP-beta-L-vancosamine = chloroeremomycin + dTDP + H(+). Its pathway is antibiotic biosynthesis; vancomycin biosynthesis. Its function is as follows. Catalyzes the attachment of dTDP-L-4-epi-vancosamine to chloroorienticin B to form chloroeremomycin in the biosynthesis of glycopeptide antibiotic chloroeremomycin, a member of the vancomycin group of antibiotics. Also able to use dTDP-L-4-epi-vancosamine and devancoaminyl-vancomycin (DVV) to create epivancomycin. Acts downstream of GtfA. In Amycolatopsis orientalis (Nocardia orientalis), this protein is Glycosyltransferase GtfC (gtfC).